The sequence spans 1842 residues: Fatty acid synthase subunit alpha (1842 aa).

The tract at residues P101–P141 is disordered. The segment covering T116 to A139 has biased composition (low complexity). Residues P145 to S220 enclose the Carrier domain. The residue at position 180 (S180) is an O-(pantetheine 4'-phosphoryl)serine. At S604 the chain carries Phosphoserine. The Ketosynthase family 3 (KS3) domain maps to L1079–H1616. C1262 functions as the For beta-ketoacyl synthase activity in the catalytic mechanism. Positions G1304–G1332 are disordered. Position 1412 is a phosphoserine (S1412). Active-site for beta-ketoacyl synthase activity residues include H1501 and H1542. 3 residues coordinate Mg(2+): D1728, V1729, and E1730. Acetyl-CoA-binding positions include D1728–E1730, Y1754, S1764, E1773–G1783, S1797–S1800, and I1827–H1829. Residues S1828 and H1829 each coordinate Mg(2+).

Belongs to the thiolase-like superfamily. Fungal fatty acid synthetase subunit alpha family. [Alpha(6)beta(6)] hexamers of two multifunctional subunits (alpha and beta).

It carries out the reaction acetyl-CoA + n malonyl-CoA + 2n NADPH + 4n H(+) = a long-chain-acyl-CoA + n CoA + n CO2 + 2n NADP(+).. The enzyme catalyses a fatty acyl-[ACP] + malonyl-[ACP] + H(+) = a 3-oxoacyl-[ACP] + holo-[ACP] + CO2. The catalysed reaction is a (3R)-hydroxyacyl-[ACP] + NADP(+) = a 3-oxoacyl-[ACP] + NADPH + H(+). Its function is as follows. Fatty acid synthetase catalyzes the formation of long-chain fatty acids from acetyl-CoA, malonyl-CoA and NADPH. The alpha subunit contains domains for: acyl carrier protein, 3-oxoacyl-[acyl-carrier-protein] reductase, and 3-oxoacyl-[acyl-carrier-protein] synthase. This subunit coordinates the binding of the six beta subunits to the enzyme complex. The polypeptide is Fatty acid synthase subunit alpha (fas2) (Schizosaccharomyces pombe (strain 972 / ATCC 24843) (Fission yeast)).